Here is a 238-residue protein sequence, read N- to C-terminus: Uridylate kinase (238 aa).

12-15 (KLSG) is a binding site for ATP. Gly-54 provides a ligand contact to UMP. Gly-55 and Arg-59 together coordinate ATP. UMP-binding positions include Asp-74 and 135–142 (TGNPFFTT). Residues Thr-162, Tyr-168, and Asp-171 each coordinate ATP.

Belongs to the UMP kinase family. In terms of assembly, homohexamer.

It is found in the cytoplasm. The enzyme catalyses UMP + ATP = UDP + ADP. It functions in the pathway pyrimidine metabolism; CTP biosynthesis via de novo pathway; UDP from UMP (UMPK route): step 1/1. Inhibited by UTP. Functionally, catalyzes the reversible phosphorylation of UMP to UDP. The chain is Uridylate kinase from Herminiimonas arsenicoxydans.